The sequence spans 313 residues: Olfactory receptor 10G3 (313 aa).

The Extracellular portion of the chain corresponds to 1–25 (MERINSTLLTAFILTGIPYPLRLRT). N-linked (GlcNAc...) asparagine glycosylation is present at asparagine 5. Residues 26–46 (LFFVFFFLIYILTQLGNLLIL) form a helical membrane-spanning segment. Over 47-54 (ITVWADPR) the chain is Cytoplasmic. Residues 55–76 (LHARPMYIFLGVLSVIDMSISS) traverse the membrane as a helical segment. Over 77–100 (IIVPRLMMNFTLGVKPIPFGGCVA) the chain is Extracellular. A glycan (N-linked (GlcNAc...) asparagine) is linked at asparagine 85. A disulfide bond links cysteine 98 and cysteine 190. The chain crosses the membrane as a helical span at residues 101–121 (QLYFYHFLGSTQCFLYTLMAY). Residues 122 to 140 (DRYLAICQPLRYPVLMTAK) lie on the Cytoplasmic side of the membrane. Residues 141-161 (LSALLVAGAWMAGSIHGALQA) form a helical membrane-spanning segment. The Extracellular segment spans residues 162–198 (ILTFRLPYCGPNQVDYFFCDIPAVLRLACADTTVNEL). A helical membrane pass occupies residues 199–218 (VTFVDIGVVVASCFSLILLS). Topologically, residues 219–238 (YIQIIQAILRIHTADGRRRA) are cytoplasmic. Residues 239 to 259 (FSTCGAHVTVVTVYYVPCAFI) form a helical membrane-spanning segment. Topologically, residues 260–270 (YLRPETNSPLD) are extracellular. Residues 271-291 (GAAALVPTAITPFLNPLIYTL) form a helical membrane-spanning segment. Residues 292 to 313 (RNQEVKLALKRMLRSPRTPSEV) are Cytoplasmic-facing.

This sequence belongs to the G-protein coupled receptor 1 family.

It is found in the cell membrane. Odorant receptor. The chain is Olfactory receptor 10G3 (OR10G3) from Homo sapiens (Human).